The chain runs to 202 residues: Glycerol-3-phosphate acyltransferase (202 aa).

6 helical membrane-spanning segments follow: residues 2 to 22 (INLLFAVIAYLIGSVSFAVVV), 51 to 71 (KAAIFTLIGDALKGLAAVLLA), 80 to 100 (VDETGIALVALAVFLGHLFPL), 116 to 136 (ILFAIDPILGAGTLATWLIIA), 137 to 157 (FFFRYSSLAALISAIFAPFFY), and 158 to 178 (VLMNGVDIMAGAILVISVLLI).

The protein belongs to the PlsY family. In terms of assembly, probably interacts with PlsX.

The protein localises to the cell inner membrane. It catalyses the reaction an acyl phosphate + sn-glycerol 3-phosphate = a 1-acyl-sn-glycero-3-phosphate + phosphate. The protein operates within lipid metabolism; phospholipid metabolism. Catalyzes the transfer of an acyl group from acyl-phosphate (acyl-PO(4)) to glycerol-3-phosphate (G3P) to form lysophosphatidic acid (LPA). This enzyme utilizes acyl-phosphate as fatty acyl donor, but not acyl-CoA or acyl-ACP. In Cupriavidus metallidurans (strain ATCC 43123 / DSM 2839 / NBRC 102507 / CH34) (Ralstonia metallidurans), this protein is Glycerol-3-phosphate acyltransferase.